The following is a 352-amino-acid chain: Type II restriction enzyme HaeII (352 aa).

It catalyses the reaction Endonucleolytic cleavage of DNA to give specific double-stranded fragments with terminal 5'-phosphates.. A P subtype restriction enzyme that recognizes the double-stranded sequence 5'-RGCGCY-3' and cleaves after C-5. This chain is Type II restriction enzyme HaeII (haeIIR), found in Haemophilus aegyptius.